The following is a 203-amino-acid chain: Casparian strip membrane protein 1 (203 aa).

Alanine 2 carries the post-translational modification N-acetylalanine. Residues 2–40 (AKESTTIDVGEPSTVTKSSSHVVKKKGFVAAAAGGGAKR) lie on the Cytoplasmic side of the membrane. The chain crosses the membrane as a helical span at residues 41 to 61 (GLAIFDFLLRLAAIGVTIGAA). Topologically, residues 62–92 (SVMYTAQETLPFFTQFLQFQAGYDDLPAFQY) are extracellular. Residues 93-113 (FVIAVAIVASYLVLSLPFSIV) form a helical membrane-spanning segment. Over 114 to 124 (TIVRPLAVAPR) the chain is Cytoplasmic. Residues 125 to 145 (LILLIFDTLVVTLNTSAAAAA) traverse the membrane as a helical segment. The Extracellular segment spans residues 146 to 177 (ASIVYLAHNGNQSTNWLPICQQFGDFCQNVST). N-linked (GlcNAc...) asparagine glycans are attached at residues asparagine 156 and asparagine 174. The chain crosses the membrane as a helical span at residues 178-198 (AVVAASIAILFFIVLIIISAI). The Cytoplasmic segment spans residues 199 to 203 (ALKRH).

The protein belongs to the Casparian strip membrane proteins (CASP) family. In terms of assembly, homodimer and heterodimers.

It localises to the cell membrane. Its function is as follows. Regulates membrane-cell wall junctions and localized cell wall deposition. Required for establishment of the Casparian strip membrane domain (CSD) and the subsequent formation of Casparian strips, a cell wall modification of the root endodermis that determines an apoplastic barrier between the intraorganismal apoplasm and the extraorganismal apoplasm and prevents lateral diffusion. In Arabidopsis lyrata subsp. lyrata (Lyre-leaved rock-cress), this protein is Casparian strip membrane protein 1.